The sequence spans 329 residues: 4-hydroxythreonine-4-phosphate dehydrogenase (329 aa).

Residues His136 and Thr137 each coordinate substrate. The a divalent metal cation site is built by His166, His211, and His266. Residues Lys274, Asn283, and Arg292 each contribute to the substrate site.

It belongs to the PdxA family. In terms of assembly, homodimer. Requires Zn(2+) as cofactor. Mg(2+) is required as a cofactor. The cofactor is Co(2+).

The protein localises to the cytoplasm. The enzyme catalyses 4-(phosphooxy)-L-threonine + NAD(+) = 3-amino-2-oxopropyl phosphate + CO2 + NADH. It participates in cofactor biosynthesis; pyridoxine 5'-phosphate biosynthesis; pyridoxine 5'-phosphate from D-erythrose 4-phosphate: step 4/5. Its function is as follows. Catalyzes the NAD(P)-dependent oxidation of 4-(phosphooxy)-L-threonine (HTP) into 2-amino-3-oxo-4-(phosphooxy)butyric acid which spontaneously decarboxylates to form 3-amino-2-oxopropyl phosphate (AHAP). The polypeptide is 4-hydroxythreonine-4-phosphate dehydrogenase (Salmonella typhimurium (strain LT2 / SGSC1412 / ATCC 700720)).